We begin with the raw amino-acid sequence, 486 residues long: 2-isopropylmalate synthase (486 aa).

The Pyruvate carboxyltransferase domain maps to 4-266 (VYIFDTTLRD…KTDVNLKEIA (263 aa)). Positions 13, 201, 203, and 237 each coordinate Mn(2+). The regulatory domain stretch occupies residues 390–486 (KVEIIHVTSG…LSTDIIEASA (97 aa)).

The protein belongs to the alpha-IPM synthase/homocitrate synthase family. LeuA type 1 subfamily. Mn(2+) is required as a cofactor.

Its subcellular location is the cytoplasm. The catalysed reaction is 3-methyl-2-oxobutanoate + acetyl-CoA + H2O = (2S)-2-isopropylmalate + CoA + H(+). The protein operates within amino-acid biosynthesis; L-leucine biosynthesis; L-leucine from 3-methyl-2-oxobutanoate: step 1/4. Functionally, catalyzes the condensation of the acetyl group of acetyl-CoA with 3-methyl-2-oxobutanoate (2-ketoisovalerate) to form 3-carboxy-3-hydroxy-4-methylpentanoate (2-isopropylmalate). This is 2-isopropylmalate synthase from Pyrococcus abyssi (strain GE5 / Orsay).